The sequence spans 415 residues: MLSWPAPQIPRLPGTGEPVRVLDTATGRLVVAATGPHARLYVCGITPYDATHLGHASTYVAFDVLVRAWLDEGKTVTYASNVTDVDDPLLERATATGVDWRDLAAQQTALYASDMTTLGVVPPDVYRGVVESVPQVVAAVDALLSRDAAYRLPAPDGGDDVYADLSADPGFGSVAGLEHAAMLALSAERGGDPDRPGKRSPLDPLLWRAERPGEPAWDAPGLGRGRPGWHVECAVIASDGLGVPFDVQGGGSDLAFPHHESSASHLRVLTGTPQPAAAHVHTGMVGYRGHKMSKSLGNLVLVSQLVADGVEPMAVRLAVLAHRYRSDWEWTDDVLATAQQRVARWRRALSGNGGPAAQPVLDGVRAAVADDLDTPRALAVVDAWATAALAGEVPFEEGAPGVVARTVDALLGVRM.

A Zn(2+)-binding site is contributed by Cys43. L-cysteinyl-5'-AMP-binding positions include 43-46 (CGIT), Thr58, and 81-83 (NVT). A 'HIGH' region motif is present at residues 45-55 (ITPYDATHLGH). The 'ERGGDP' region motif lies at 188 to 193 (ERGGDP). Residue Trp229 coordinates L-cysteinyl-5'-AMP. Cys233 is a Zn(2+) binding site. Position 251–253 (251–253 (GSD)) interacts with L-cysteinyl-5'-AMP. His258 contacts Zn(2+). Val285 contacts L-cysteinyl-5'-AMP. Positions 291-295 (KMSKS) match the 'KMSKS' region motif.

The protein belongs to the class-I aminoacyl-tRNA synthetase family. MshC subfamily. As to quaternary structure, monomer. The cofactor is Zn(2+).

The enzyme catalyses 1D-myo-inositol 2-amino-2-deoxy-alpha-D-glucopyranoside + L-cysteine + ATP = 1D-myo-inositol 2-(L-cysteinylamino)-2-deoxy-alpha-D-glucopyranoside + AMP + diphosphate + H(+). Its function is as follows. Catalyzes the ATP-dependent condensation of GlcN-Ins and L-cysteine to form L-Cys-GlcN-Ins. The chain is L-cysteine:1D-myo-inositol 2-amino-2-deoxy-alpha-D-glucopyranoside ligase from Cellulomonas flavigena (strain ATCC 482 / DSM 20109 / BCRC 11376 / JCM 18109 / NBRC 3775 / NCIMB 8073 / NRS 134).